A 223-amino-acid polypeptide reads, in one-letter code: MDPPRLRVATYLLLLSVGLLLHGGACQPYYLLRPIPSDSLPIVELKEDPGPVFDPKERDLNETELKSVLGDFDSRFLSVLPPAEDGHAGNDELDDFDAQRWGGALPKEIRAVDFDAPQLGKKHKPSKKLKRRLQQWLWAYSFCPLAHAWTDLGSRFWPRFVRAGSCLSKRSCSVPEGMTCKPATSTHLTILRWRCVQRKVGLKCAWIPMQYPVITDCKCSCSG.

The N-terminal stretch at 1-26 (MDPPRLRVATYLLLLSVGLLLHGGAC) is a signal peptide. An N-linked (GlcNAc...) asparagine glycan is attached at N61. 4 disulfide bridges follow: C143–C180, C166–C217, C172–C219, and C195–C204.

This sequence belongs to the noggin family. In terms of assembly, homodimer.

It is found in the secreted. In terms of biological role, inhibitor of bone morphogenetic proteins (BMP) signaling. This chain is Noggin (nog), found in Takifugu rubripes (Japanese pufferfish).